The following is a 448-amino-acid chain: Na(+)-malate symporter (448 aa).

11 helical membrane passes run 31 to 51, 60 to 80, 86 to 106, 123 to 143, 153 to 173, 182 to 202, 214 to 234, 276 to 293, 297 to 319, 333 to 353, and 359 to 379; these read IGVI…LAAY, LGGF…GQRI, IGGP…YNVL, FLYF…NRIV, VPLV…GFIF, FFVV…PLSI, VFVS…IICA, LMGA…FGGL, FIFI…ANIL, FISS…FIPL, and VISI…IGSG.

Belongs to the 2-hydroxycarboxylate transporter (2-HCT) (TC 2.A.24) family.

It is found in the cell membrane. Its function is as follows. Acts as a Na(+)-malate symporter, as it catalyzes malate-dependent uptake of Na(+) and Na(+)-dependent uptake of malate. The polypeptide is Na(+)-malate symporter (Bacillus subtilis (strain 168)).